Reading from the N-terminus, the 139-residue chain is Nucleoside diphosphate kinase (139 aa).

Residues K10, F58, R86, T92, R104, and N114 each coordinate ATP. The active-site Pros-phosphohistidine intermediate is the H117.

Belongs to the NDK family. In terms of assembly, homotetramer. The cofactor is Mg(2+).

The protein localises to the cytoplasm. The catalysed reaction is a 2'-deoxyribonucleoside 5'-diphosphate + ATP = a 2'-deoxyribonucleoside 5'-triphosphate + ADP. It catalyses the reaction a ribonucleoside 5'-diphosphate + ATP = a ribonucleoside 5'-triphosphate + ADP. Its function is as follows. Major role in the synthesis of nucleoside triphosphates other than ATP. The ATP gamma phosphate is transferred to the NDP beta phosphate via a ping-pong mechanism, using a phosphorylated active-site intermediate. This is Nucleoside diphosphate kinase from Nocardia farcinica (strain IFM 10152).